Reading from the N-terminus, the 48-residue chain is Large ribosomal subunit protein bL33A (48 aa).

The protein belongs to the bacterial ribosomal protein bL33 family.

This Bacillus mycoides (strain KBAB4) (Bacillus weihenstephanensis) protein is Large ribosomal subunit protein bL33A.